The following is a 131-amino-acid chain: Protein NEGATIVE REGULATOR OF RESISTANCE (131 aa).

Disordered stretches follow at residues 1-33 (MDATTTDATTAKRKRPAASDIADDAPTTVDEVS) and 51-131 (TRRL…RAPA). A Nuclear localization signal motif is present at residues 12–15 (KRKR). The span at 116-131 (PPSDAPATPRSARAPA) shows a compositional bias: low complexity.

The protein belongs to the NPR1-interactor family. In terms of assembly, interacts with NPR1/NH1. Interacts with NPR2/NH2.

The protein localises to the nucleus. Its function is as follows. Acts as a negative regulator of disease resistance. Acts on basal resistance, age-related resistance and resistance mediated by the LRR receptor kinase XA21. Plants over-expressing NRR display enhanced susceptibility to the bacterial blight Xanthomonas oryzae pv. oryzae (Xoo). This chain is Protein NEGATIVE REGULATOR OF RESISTANCE, found in Oryza sativa subsp. indica (Rice).